The following is a 158-amino-acid chain: Glutamyl-tRNA(Gln) amidotransferase subunit C, mitochondrial (158 aa).

The protein belongs to the GatC family. Subunit of the heterotrimeric GatCAB amidotransferase (AdT) complex, composed of A, B and C subunits.

It is found in the mitochondrion. The catalysed reaction is L-glutamyl-tRNA(Gln) + L-glutamine + ATP + H2O = L-glutaminyl-tRNA(Gln) + L-glutamate + ADP + phosphate + H(+). In terms of biological role, allows the formation of correctly charged Gln-tRNA(Gln) through the transamidation of misacylated Glu-tRNA(Gln) in the mitochondria. The reaction takes place in the presence of glutamine and ATP through an activated gamma-phospho-Glu-tRNA(Gln). This is Glutamyl-tRNA(Gln) amidotransferase subunit C, mitochondrial from Drosophila grimshawi (Hawaiian fruit fly).